Consider the following 211-residue polypeptide: Sec-independent protein translocase protein TatB (211 aa).

A helical membrane pass occupies residues 1 to 21; it reads MFDIGVGELTLIAVVALVVLG. Residues 175–211 form a disordered region; sequence AHLTSAPAPPVTVAPVDAGTSASPTPSEPTKIQEKQP. Polar residues predominate over residues 194-204; that stretch reads TSASPTPSEPT.

This sequence belongs to the TatB family. As to quaternary structure, the Tat system comprises two distinct complexes: a TatABC complex, containing multiple copies of TatA, TatB and TatC subunits, and a separate TatA complex, containing only TatA subunits. Substrates initially bind to the TatABC complex, which probably triggers association of the separate TatA complex to form the active translocon.

The protein localises to the cell inner membrane. Part of the twin-arginine translocation (Tat) system that transports large folded proteins containing a characteristic twin-arginine motif in their signal peptide across membranes. Together with TatC, TatB is part of a receptor directly interacting with Tat signal peptides. TatB may form an oligomeric binding site that transiently accommodates folded Tat precursor proteins before their translocation. The chain is Sec-independent protein translocase protein TatB from Xanthomonas oryzae pv. oryzae (strain MAFF 311018).